A 165-amino-acid chain; its full sequence is Large ribosomal subunit protein uL15 (165 aa).

Residues 1–30 (MTNKKRRQRGSRTHGGGTHKNRRGAGHRGG) show a composition bias toward basic residues. Disordered stretches follow at residues 1–39 (MTNK…RAKH) and 137–165 (AGGE…DDEA). A compositionally biased stretch (acidic residues) spans 150–165 (AADESENTSDDEDDEA).

It belongs to the universal ribosomal protein uL15 family. As to quaternary structure, part of the 50S ribosomal subunit.

In terms of biological role, binds to the 23S rRNA. The polypeptide is Large ribosomal subunit protein uL15 (Halorubrum lacusprofundi (strain ATCC 49239 / DSM 5036 / JCM 8891 / ACAM 34)).